The following is a 386-amino-acid chain: CUE domain-containing protein 1 (386 aa).

Positions 1–10 are enriched in low complexity; it reads MTSLFRRSSS. Positions 1 to 40 are disordered; that stretch reads MTSLFRRSSSGSGGGGTAGARGGGGGTAAPQELNNSRPAR. Positions 11 to 27 are enriched in gly residues; sequence GSGGGGTAGARGGGGGT. A CUE domain is found at 46–89; that stretch reads EFNQAMDDFKTMFPNMDYDIIECVLRANSGAVDATIDQLLQMNL. Disordered regions lie at residues 147–172, 195–225, and 367–386; these read LAPP…RYRN, SIQG…DQES, and DFRG…REGQ. Over residues 199 to 209 the composition is skewed to gly residues; the sequence is NAGGPKPGSGE.

The sequence is that of CUE domain-containing protein 1 (CUEDC1) from Homo sapiens (Human).